Here is a 267-residue protein sequence, read N- to C-terminus: MTRIGRLFDCLKRENRKALIAYLTAGDPTPDHTPGLVEALVRGGADLIELGVPFTDPIADGPVIQRAGERALKAGTTLASVLEIARKIRETSEVPLLLFTYLNPVLRYGLDRLGADAAAAGIDGCLLTDASVEEAESYVAAMHKHGLDTVFLAAPTSTARRIELVARYSTGFVYLVSRTGVTGERESLSASVAPLIQAVRAATDLPLAVGFGISKPEHVAELGSQVEAVVVGSAFVRLIEQNAESAALEIQLESFTRELKRGFGARA.

Active-site proton acceptor residues include glutamate 49 and aspartate 60.

It belongs to the TrpA family. As to quaternary structure, tetramer of two alpha and two beta chains.

The catalysed reaction is (1S,2R)-1-C-(indol-3-yl)glycerol 3-phosphate + L-serine = D-glyceraldehyde 3-phosphate + L-tryptophan + H2O. Its pathway is amino-acid biosynthesis; L-tryptophan biosynthesis; L-tryptophan from chorismate: step 5/5. The alpha subunit is responsible for the aldol cleavage of indoleglycerol phosphate to indole and glyceraldehyde 3-phosphate. The chain is Tryptophan synthase alpha chain from Solibacter usitatus (strain Ellin6076).